We begin with the raw amino-acid sequence, 194 residues long: Protein GrpE (194 aa).

Residues 1 to 12 (MSSKEQNTPNEQ) show a composition bias toward polar residues. A disordered region spans residues 1–39 (MSSKEQNTPNEQASDEIETEQAKNQGADTAAEAADQRDE).

Belongs to the GrpE family. As to quaternary structure, homodimer.

Its subcellular location is the cytoplasm. Its function is as follows. Participates actively in the response to hyperosmotic and heat shock by preventing the aggregation of stress-denatured proteins, in association with DnaK and GrpE. It is the nucleotide exchange factor for DnaK and may function as a thermosensor. Unfolded proteins bind initially to DnaJ; upon interaction with the DnaJ-bound protein, DnaK hydrolyzes its bound ATP, resulting in the formation of a stable complex. GrpE releases ADP from DnaK; ATP binding to DnaK triggers the release of the substrate protein, thus completing the reaction cycle. Several rounds of ATP-dependent interactions between DnaJ, DnaK and GrpE are required for fully efficient folding. The protein is Protein GrpE of Erwinia tasmaniensis (strain DSM 17950 / CFBP 7177 / CIP 109463 / NCPPB 4357 / Et1/99).